The primary structure comprises 313 residues: N-acetyl-gamma-glutamyl-phosphate reductase (313 aa).

Residue Cys-117 is part of the active site.

The protein belongs to the NAGSA dehydrogenase family. Type 2 subfamily.

Its subcellular location is the cytoplasm. It carries out the reaction N-acetyl-L-glutamate 5-semialdehyde + phosphate + NADP(+) = N-acetyl-L-glutamyl 5-phosphate + NADPH + H(+). Its pathway is amino-acid biosynthesis; L-arginine biosynthesis; N(2)-acetyl-L-ornithine from L-glutamate: step 3/4. In terms of biological role, catalyzes the NADPH-dependent reduction of N-acetyl-5-glutamyl phosphate to yield N-acetyl-L-glutamate 5-semialdehyde. This chain is N-acetyl-gamma-glutamyl-phosphate reductase, found in Burkholderia cenocepacia (strain HI2424).